The chain runs to 683 residues: MALSKRELDELKPWIEKTVKRVLGFSEPTVVTAALNCVGKGMDKKKAADHLKPFLDDSTLRFVDKLFEAVEEGRSSRHSKSSSDRSRKRELKEVFGDDSEISKESSGVKKRRIPRFEEVEEEPEVIPGPPSESPGMLTKLQIKQMMEAATRQIEERKKQLSFISPPAPQPKTPSSSQPERLPIGNTIQPSQAATFMNDAIEKARKAAELQARIQAQLALKPGLIGNANMVGLANLHAMGIAPPKVELKDQTKPTPLILDEQGRTVDATGKEVELTHRMPTLKANIRAVKREQFKQQLKEKPSEDMESNTFFDPRVSIAPSQRQRRTFKFHDKGKFEKIAQRLRTKAQLEKLQAEISQAARKTGIHTSTRLALIAPKKELKEGDIPEIEWWDSYIIPNGFDLTEENPKREDYFGITNLVEHPAQLNPPVDNDTPVTLGVYLTKKEQKKLRRQTRREAQKELQEKVRLGLTPPPEPKVRISNLMRVLGTEAVQDPTKVEAHVRAQMAKRQKAHEEANAARKLTAEQRKVKKIKKLKEDISQGVHISVYRVRNLSNPAKKFKIEANAGQLYLTGVVVLHKDVNVVVVEGGPKAQKKFKRLMLHRIKWDEQTSNTKGDDDEESDEEAVKKTNKCVLVWEGTAKDRSFGEMKFKQCPTENMAREHFKKHGAEHYWDLALSESVLESTD.

The PWI domain maps to 1–87 (MALSKRELDE…HSKSSSDRSR (87 aa)). Residues 73-107 (GRSSRHSKSSSDRSRKRELKEVFGDDSEISKESSG) are compositionally biased toward basic and acidic residues. A disordered region spans residues 73 to 135 (GRSSRHSKSS…IPGPPSESPG (63 aa)). A Glycyl lysine isopeptide (Lys-Gly) (interchain with G-Cter in SUMO2) cross-link involves residue Lys139. The segment at 161 to 183 (SFISPPAPQPKTPSSSQPERLPI) is disordered. Position 164 is a phosphoserine (Ser164). Glycyl lysine isopeptide (Lys-Gly) (interchain with G-Cter in SUMO2) cross-links involve residues Lys244 and Lys252. The interval 416-550 (NLVEHPAQLN…VHISVYRVRN (135 aa)) is mediates interaction with SART3. Phosphoserine is present on Ser619.

In terms of assembly, component of the precatalytic spliceosome (spliceosome B complex). Component of the U4/U6-U5 tri-snRNP complex, a building block of the precatalytic spliceosome (spliceosome B complex). The U4/U6-U5 tri-snRNP complex is composed of the U4, U6 and U5 snRNAs and at least PRPF3, PRPF4, PRPF6, PRPF8, PRPF31, SNRNP200, TXNL4A, SNRNP40, SNRPB, SNRPD1, SNRPD2, SNRPD3, SNRPE, SNRPF, SNRPG, DDX23, CD2BP2, PPIH, SNU13, EFTUD2, SART1 and USP39, plus LSM2, LSM3, LSM4, LSM5, LSM6, LSM7 and LSM8. Interacts directly with PRPF4. Part of a heteromeric complex containing PPIH, PRPF3 and PRPF4 that is stable in the absence of RNA. Interacts with SART3; the interaction is direct and recruits the deubiquitinase USP4 to PRPF3. Interacts with PRPF19. Interacts ('Lys-63'-linked polyubiquitinated) with PRPF8 (via the MPN (JAB/Mov34) domain); may stabilize the U4/U6-U5 tri-snRNP complex. Interacts with ERCC6. In terms of processing, ubiquitinated. Undergoes 'Lys-63'-linked polyubiquitination by PRPF19 and deubiquitination by USP4. 'Lys-63'-linked ubiquitination increases the affinity for PRPF8 and may regulate the assembly of the U4/U6-U5 tri-snRNP complex.

The protein localises to the nucleus. Its subcellular location is the nucleus speckle. In terms of biological role, plays a role in pre-mRNA splicing as component of the U4/U6-U5 tri-snRNP complex that is involved in spliceosome assembly, and as component of the precatalytic spliceosome (spliceosome B complex). In Mus musculus (Mouse), this protein is U4/U6 small nuclear ribonucleoprotein Prp3 (Prpf3).